Consider the following 305-residue polypeptide: uncharacterized protein (305 aa).

Positions 1–29 (MKKWFSSISKKKVSFSTLLLLGSGIVLSS) are cleaved as a signal peptide. Residue Cys30 is the site of N-palmitoyl cysteine attachment. The S-diacylglycerol cysteine moiety is linked to residue Cys30. Residues 234–265 (FYNPDNSNGSNAPGSNQPNQDSGNNGSTTPAA) are disordered. Residues 237–258 (PDNSNGSNAPGSNQPNQDSGNN) show a composition bias toward polar residues.

The protein resides in the cell membrane. This is an uncharacterized protein from Mycoplasma pneumoniae (strain ATCC 29342 / M129 / Subtype 1) (Mycoplasmoides pneumoniae).